We begin with the raw amino-acid sequence, 201 residues long: Interferon-induced transmembrane protein 10 (201 aa).

Disordered stretches follow at residues 1–23 and 60–88; these read MAQG…DGTQ and AAPA…KTDS. The Extracellular segment spans residues 1–127; it reads MAQGPSQCPA…PDTTEVNDYY (127 aa). The segment covering 63–73 has biased composition (pro residues); sequence APEPSASPPMA. The helical transmembrane segment at 128-148 threads the bilayer; that stretch reads LWSIFNFVYLNFCCLGFIALA. 2 S-palmitoyl cysteine lipidation sites follow: cysteine 140 and cysteine 141. Topologically, residues 149–173 are cytoplasmic; that stretch reads YSLKVRDKKLLNDLNGAVEDAKTAR. A helical membrane pass occupies residues 174 to 194; that stretch reads LFNITSSALAASCIILIFIFL. Topologically, residues 195-201 are extracellular; sequence RYPLTDY.

It belongs to the CD225/Dispanin family.

It localises to the cell membrane. This Mus musculus (Mouse) protein is Interferon-induced transmembrane protein 10 (Ifitm10).